The sequence spans 713 residues: U3 small nucleolar RNA-associated protein 8 (713 aa).

The residue at position 95 (Thr95) is a Phosphothreonine. A phosphoserine mark is found at Ser148 and Ser150.

In terms of assembly, interacts with snoRNA U3. Interacts with MPP10 and UTP25. Component of the ribosomal small subunit (SSU) processome composed of at least 40 protein subunits and snoRNA U3. In the absence of snoRNA3, forms a complex with other t-UTPs. This complex can associate with pre-18S ribosomal RNAs.

Its subcellular location is the nucleus. It localises to the nucleolus. Involved in nucleolar processing of pre-18S ribosomal RNA. Also has a role in nuclear tRNA export. It acts between the steps of tRNA maturation/aminoacylation and its subsequent translocation out of the nucleus. Required for optimal pre-ribosomal RNA transcription by RNA polymerase I together with a subset of U3 proteins required for transcription (t-UTPs). The sequence is that of U3 small nucleolar RNA-associated protein 8 (UTP8) from Saccharomyces cerevisiae (strain ATCC 204508 / S288c) (Baker's yeast).